The chain runs to 413 residues: MSMAATETLNRTDIAKAPQVRLAAQPEKPSLIGLLREDMAKLLVEKGVPERQVKMRVSQVWHWLYVRGVSDFNEMSNVSKDMREMLSAHFTIARPEIVEEQVSGDGTRKWLLRFPPRGAGRPVEIETVYIPEEGRGTLCISSQVGCTLTCSFCHTGTQKLVRNLTAEEILAQLLLARDRLGDFPDRDTPQGAIVPAEGRKITNVVMMGMGEPLYNFENVKTALLIASDGDGLSLSKRRITLSTSGIVPEIYRTGEEIGVMLAISLHAVRDDLRDMLVPINKKYPLKELMEACRAYPGLSNARRITFEYVMLKDVNDSLEDAKELVKLLKGIPAKINLIPFNPWPGTNYQCSDWEQIEKFADFINQAGYASPIRTPRGRDILAACGQLKSDSERMRKVDRLAFEAMMIANHGED.

E126 serves as the catalytic Proton acceptor. The Radical SAM core domain maps to 132–381 (EEGRGTLCIS…IRTPRGRDIL (250 aa)). C139 and C384 are disulfide-bonded. C146, C150, and C153 together coordinate [4Fe-4S] cluster. Residues 210–211 (GE), S242, 264–266 (SLH), and N341 each bind S-adenosyl-L-methionine. C384 acts as the S-methylcysteine intermediate in catalysis.

This sequence belongs to the radical SAM superfamily. RlmN family. It depends on [4Fe-4S] cluster as a cofactor.

The protein localises to the cytoplasm. The catalysed reaction is adenosine(2503) in 23S rRNA + 2 reduced [2Fe-2S]-[ferredoxin] + 2 S-adenosyl-L-methionine = 2-methyladenosine(2503) in 23S rRNA + 5'-deoxyadenosine + L-methionine + 2 oxidized [2Fe-2S]-[ferredoxin] + S-adenosyl-L-homocysteine. It carries out the reaction adenosine(37) in tRNA + 2 reduced [2Fe-2S]-[ferredoxin] + 2 S-adenosyl-L-methionine = 2-methyladenosine(37) in tRNA + 5'-deoxyadenosine + L-methionine + 2 oxidized [2Fe-2S]-[ferredoxin] + S-adenosyl-L-homocysteine. In terms of biological role, specifically methylates position 2 of adenine 2503 in 23S rRNA and position 2 of adenine 37 in tRNAs. m2A2503 modification seems to play a crucial role in the proofreading step occurring at the peptidyl transferase center and thus would serve to optimize ribosomal fidelity. This Sinorhizobium medicae (strain WSM419) (Ensifer medicae) protein is Dual-specificity RNA methyltransferase RlmN.